We begin with the raw amino-acid sequence, 334 residues long: Zinc-finger homeodomain protein 10 (334 aa).

Over residues 1–15 (MMDMTPTITTTTTPT) the composition is skewed to low complexity. 2 disordered regions span residues 1 to 33 (MMDMTPTITTTTTPTPKSPEPESETPTRIQPAK) and 103 to 164 (FHRR…LLSL). The ZF-HD dimerization-type; degenerate zinc-finger motif lies at 56–107 (YKECLKNHAAALGGHALDGCGEFMPSPSSISSDPTSLKCAACGCHRNFHRRD). Pro residues predominate over residues 136–155 (PPPPPPPPPRSPNSASPPPI). The segment at residues 200–263 (RKRFRTKFSQ…NNKNTFNRRD (64 aa)) is a DNA-binding region (homeobox). The tract at residues 292–334 (NGHHGVGGGGELHQSVSSGGGGGGFDSDSGGANGGNVNGSSSS) is disordered. Residues 309-328 (SGGGGGGFDSDSGGANGGNV) show a composition bias toward gly residues.

In terms of assembly, homo- and heterodimer with other ZFHD proteins. Interacts with MIF1, MIF2 and MIF3; these interactions prevent nuclear localization and DNA-binding to inhibit transcription regulation activity. Binds to ZHD1, ZHD2, ZHD4, ZHD5, ZHD6, ZHD7 and ZHD8. Interacts with KIN10 and KIN11. In terms of tissue distribution, mostly expressed in rosettes (e.g. young leaves), flowers (e.g. styles), siliques and inflorescence.

Its subcellular location is the nucleus. In terms of biological role, putative transcription factor. Probably involved in establishing polarity during leaf development through the gibberellic acid (GA) signaling pathway. The chain is Zinc-finger homeodomain protein 10 (ZHD10) from Arabidopsis thaliana (Mouse-ear cress).